The following is a 1252-amino-acid chain: DNA-directed RNA polymerase subunit beta (1252 aa).

Belongs to the RNA polymerase beta chain family. In terms of assembly, the RNAP catalytic core consists of 2 alpha, 1 beta, 1 beta' and 1 omega subunit. When a sigma factor is associated with the core the holoenzyme is formed, which can initiate transcription.

The catalysed reaction is RNA(n) + a ribonucleoside 5'-triphosphate = RNA(n+1) + diphosphate. Functionally, DNA-dependent RNA polymerase catalyzes the transcription of DNA into RNA using the four ribonucleoside triphosphates as substrates. This is DNA-directed RNA polymerase subunit beta from Chlamydia trachomatis serovar L2 (strain ATCC VR-902B / DSM 19102 / 434/Bu).